Here is a 135-residue protein sequence, read N- to C-terminus: Thioredoxin H5 (135 aa).

Positions 13–128 constitute a Thioredoxin domain; the sequence is EHLDYSGGNV…LQEKFEQLNR (116 aa). Residues cysteine 54 and cysteine 57 each act as nucleophile in the active site. Cysteines 54 and 57 form a disulfide.

Belongs to the thioredoxin family. Plant H-type subfamily.

The protein resides in the cytoplasm. In terms of biological role, probable thiol-disulfide oxidoreductase that may be involved in the redox regulation of a number of cytosolic enzymes. The protein is Thioredoxin H5 of Oryza sativa subsp. japonica (Rice).